Reading from the N-terminus, the 70-residue chain is Large ribosomal subunit protein bL31 (70 aa).

Positions 16, 18, 37, and 40 each coordinate Zn(2+).

This sequence belongs to the bacterial ribosomal protein bL31 family. Type A subfamily. Part of the 50S ribosomal subunit. Zn(2+) serves as cofactor.

Functionally, binds the 23S rRNA. The protein is Large ribosomal subunit protein bL31 of Shewanella halifaxensis (strain HAW-EB4).